The primary structure comprises 118 residues: Succinate dehydrogenase assembly factor 1, mitochondrial (118 aa).

The LYR motif 1; required for interaction with HSC20 signature appears at leucine 14–arginine 16. The LYR motif 2; not required for interaction with HSC20 motif lies at leucine 53–arginine 55. An interaction with SDHB region spans residues leucine 53–arginine 65. Residues methionine 72–arginine 118 form a disordered region.

This sequence belongs to the complex I LYR family. SDHAF1 subfamily. Interacts with SDHB within an SDHA-SDHB subcomplex. Also interacts with the iron-sulfur transfer complex formed by HSC20, HSPA9 and ISCU through direct binding to HSC20. Binding of SDHAF1 to SDHB precedes and is necessary for recruitment of the iron-sulfur transfer complex by SDHAF1.

The protein localises to the mitochondrion matrix. Functionally, plays an essential role in the assembly of succinate dehydrogenase (SDH), an enzyme complex (also referred to as respiratory complex II) that is a component of both the tricarboxylic acid (TCA) cycle and the mitochondrial electron transport chain, and which couples the oxidation of succinate to fumarate with the reduction of ubiquinone (coenzyme Q) to ubiquinol. Promotes maturation of the iron-sulfur protein subunit SDHB of the SDH catalytic dimer, protecting it from the deleterious effects of oxidants. May act together with SDHAF3. Contributes to iron-sulfur cluster incorporation into SDHB by binding to SDHB and recruiting the iron-sulfur transfer complex formed by HSC20, HSPA9 and ISCU through direct binding to HSC20. This is Succinate dehydrogenase assembly factor 1, mitochondrial from Bos taurus (Bovine).